An 805-amino-acid polypeptide reads, in one-letter code: Phenylalanine--tRNA ligase beta subunit (805 aa).

A tRNA-binding domain is found at 39–148; that stretch reads APPFTGVVVT…AALRPGTDIR (110 aa). One can recognise a B5 domain in the interval 399–474; that stretch reads PVREPVRMRL…RVYGFERIPD (76 aa). The Mg(2+) site is built by Asp452, Asp458, Glu461, and Glu462. Residues 703-804 enclose the FDX-ACB domain; the sequence is SRQPVVVRDL…LVAAHNARQR (102 aa).

This sequence belongs to the phenylalanyl-tRNA synthetase beta subunit family. Type 1 subfamily. As to quaternary structure, tetramer of two alpha and two beta subunits. Requires Mg(2+) as cofactor.

It localises to the cytoplasm. The enzyme catalyses tRNA(Phe) + L-phenylalanine + ATP = L-phenylalanyl-tRNA(Phe) + AMP + diphosphate + H(+). In Bordetella pertussis (strain Tohama I / ATCC BAA-589 / NCTC 13251), this protein is Phenylalanine--tRNA ligase beta subunit.